Consider the following 445-residue polypeptide: Ribosomal protein uS12 methylthiotransferase RimO (445 aa).

Residues 4-119 form the MTTase N-terminal domain; it reads YKVGMVSLGC…INEAIMNFIN (116 aa). [4Fe-4S] cluster-binding residues include C13, C48, C82, C157, C161, and C164. The Radical SAM core domain maps to 143–373; it reads TTDKATAYLR…MLLQKELSEE (231 aa). In terms of domain architecture, TRAM spans 376-441; the sequence is KNKLGREYDV…EYDLVGVVCN (66 aa).

It belongs to the methylthiotransferase family. RimO subfamily. It depends on [4Fe-4S] cluster as a cofactor.

The protein localises to the cytoplasm. The catalysed reaction is L-aspartate(89)-[ribosomal protein uS12]-hydrogen + (sulfur carrier)-SH + AH2 + 2 S-adenosyl-L-methionine = 3-methylsulfanyl-L-aspartate(89)-[ribosomal protein uS12]-hydrogen + (sulfur carrier)-H + 5'-deoxyadenosine + L-methionine + A + S-adenosyl-L-homocysteine + 2 H(+). Catalyzes the methylthiolation of an aspartic acid residue of ribosomal protein uS12. The protein is Ribosomal protein uS12 methylthiotransferase RimO of Clostridium perfringens (strain SM101 / Type A).